A 579-amino-acid polypeptide reads, in one-letter code: Nif-specific regulatory protein (579 aa).

The GAF domain maps to 40–187; it reads DPVAEVPQIF…MVASLLEQAL (148 aa). The Sigma-54 factor interaction domain maps to 226 to 454; sequence IVGSSPAIAE…LENCVNRAAA (229 aa). Residues 254 to 261 and 317 to 326 each bind ATP; these read GESGTGKE and ADGGTLFLDE. The tract at residues 464-536 is inter-domain linker; sequence EELACRQGAC…PLRTKTAQLS (73 aa). Residues Cys468 and Cys473 each contribute to the a divalent metal cation site. The disordered stretch occupies residues 502–529; it reads RVSAPPPEPAPAPEPAPEAPPREEVPLR. 7 consecutive repeat copies span residues 505-506, 507-508, 509-510, 511-512, 513-514, 515-516, and 517-518. Residues 505-518 form a 7 X 2 AA tandem repeats of X-P region; that stretch reads APPPEPAPAPEPAP. Pro residues predominate over residues 505 to 520; that stretch reads APPPEPAPAPEPAPEA. Positions 537–579 are C-terminal DNA-binding domain; the sequence is REELLRALESAGWVQAKAARLLGMTPRQIAYALQKFEIELRKI. The segment at residues 551-570 is a DNA-binding region (H-T-H motif); sequence QAKAARLLGMTPRQIAYALQ.

As to quaternary structure, interacts with sigma-54.

In terms of biological role, required for activation of most nif operons, which are directly involved in nitrogen fixation. The chain is Nif-specific regulatory protein (nifA1) from Rhodobacter capsulatus (Rhodopseudomonas capsulata).